The chain runs to 119 residues: Toxin ICK-11 (119 aa).

An N-terminal signal peptide occupies residues 1–19; it reads MMKLYSLVIIATLAAAAFA. 4 disulfide bridges follow: cysteine 59-cysteine 74, cysteine 67-cysteine 80, cysteine 71-cysteine 116, and cysteine 73-cysteine 87.

It belongs to the neurotoxin 25 family. ICK-8 subfamily. In terms of tissue distribution, expressed by the venom gland.

Its subcellular location is the secreted. Ion channel inhibitor. The protein is Toxin ICK-11 of Trittame loki (Brush-footed trapdoor spider).